The primary structure comprises 154 residues: Periplasmic nitrate reductase, electron transfer subunit (154 aa).

A signal peptide spans 1-24 (MSMHPALRLLATVLVALGAGPAFT). Residues 27–47 (APRLTGADRPMSEVAAPPLPE) form a disordered region. Residues H68, C82, C85, H86, H103, C122, C125, and H126 each contribute to the heme c site.

Belongs to the NapB family. In terms of assembly, component of the periplasmic nitrate reductase NapAB complex composed of NapA and NapB. Binds 2 heme C groups per subunit.

The protein localises to the periplasm. Its function is as follows. Electron transfer subunit of the periplasmic nitrate reductase complex NapAB. Receives electrons from the membrane-anchored tetraheme c-type NapC protein and transfers these to NapA subunit, thus allowing electron flow between membrane and periplasm. Essential for periplasmic nitrate reduction with nitrate as the terminal electron acceptor. The chain is Periplasmic nitrate reductase, electron transfer subunit from Cereibacter sphaeroides (Rhodobacter sphaeroides).